The sequence spans 382 residues: MKKVIILGSTGSIGTQTLDVIKNFRENFEIVGLTAYNNVELLSKQIREFNPKVVAVKDEDKANQLRENLKKNVEILTGSKGLQEIVKYDADLVVVAVEGIAGLIPTVTAIQRGKDIALANKEVLVTAGQIVMDLVKKKDITLLPVDSEHSAILQCLRGNDKKEVSRLILTASGGPFRGKKKEDLRKVTVNEALNHPNWKMGKKITIDSATLMNKGFEVIEAKWLFDISEDKIDVIVHPQSIIHSMVEYIDGSVIAQLAAADMRIPIQYALNYPTRNYINGINFLDFSLTTQLTFEKPDLETFRCLSLAYEALKIGGTMTTVLNAADEIAVSLFLNKKIEFLQIAEIIEESMKEHNNIQNPTLDDIINVDKEVKEKIAKKYMR.

Positions 10, 11, 12, 13, 38, and 120 each coordinate NADPH. Lys121 provides a ligand contact to 1-deoxy-D-xylulose 5-phosphate. Glu122 serves as a coordination point for NADPH. Asp146 contributes to the Mn(2+) binding site. Residues Ser147, Glu148, Ser172, and His195 each coordinate 1-deoxy-D-xylulose 5-phosphate. Glu148 provides a ligand contact to Mn(2+). Gly201 is an NADPH binding site. The 1-deoxy-D-xylulose 5-phosphate site is built by Ser208, Asn213, Lys214, and Glu217. Glu217 is a Mn(2+) binding site.

It belongs to the DXR family. Mg(2+) is required as a cofactor. It depends on Mn(2+) as a cofactor.

It catalyses the reaction 2-C-methyl-D-erythritol 4-phosphate + NADP(+) = 1-deoxy-D-xylulose 5-phosphate + NADPH + H(+). It functions in the pathway isoprenoid biosynthesis; isopentenyl diphosphate biosynthesis via DXP pathway; isopentenyl diphosphate from 1-deoxy-D-xylulose 5-phosphate: step 1/6. In terms of biological role, catalyzes the NADPH-dependent rearrangement and reduction of 1-deoxy-D-xylulose-5-phosphate (DXP) to 2-C-methyl-D-erythritol 4-phosphate (MEP). This Thermoanaerobacter pseudethanolicus (strain ATCC 33223 / 39E) (Clostridium thermohydrosulfuricum) protein is 1-deoxy-D-xylulose 5-phosphate reductoisomerase.